Reading from the N-terminus, the 197-residue chain is MRLCDRDIYQHLQDGKIKIDPTPDYDQISGVTVDIRLGNKFRVFEDHQAPFIDLSGPKAQVQEALDHVMSDEIELEEGKAFFLHPGELALAITHESVTLPDNIVGWLDGRSSLARLGLMVHVTAHRIDPGWSGNIVLEFYNSGKLPLALRPKMKIGALSFEVLSAPAEKPYNARVDAKYKGQAGAVASRISSDDQSK.

DCTP is bound by residues 110 to 115 (RSSLAR), Asp128, 136 to 138 (VLE), Tyr171, and Gln182. The active-site Proton donor/acceptor is the Glu138.

This sequence belongs to the dCTP deaminase family. In terms of assembly, homotrimer.

It catalyses the reaction dCTP + H2O + H(+) = dUTP + NH4(+). It participates in pyrimidine metabolism; dUMP biosynthesis; dUMP from dCTP (dUTP route): step 1/2. Functionally, catalyzes the deamination of dCTP to dUTP. In Alteromonas mediterranea (strain DSM 17117 / CIP 110805 / LMG 28347 / Deep ecotype), this protein is dCTP deaminase.